Here is a 306-residue protein sequence, read N- to C-terminus: Serine/threonine-protein kinase csk1 (306 aa).

Residues 11 to 306 enclose the Protein kinase domain; it reads LTDIRHLTDG…KVSARLSQYA (296 aa). Residues 17–25 and Lys-40 contribute to the ATP site; that span reads LTDGTISEV. The active-site Proton acceptor is the Asp-129.

The protein belongs to the protein kinase superfamily. CMGC Ser/Thr protein kinase family. CDC2/CDKX subfamily.

The catalysed reaction is L-seryl-[protein] + ATP = O-phospho-L-seryl-[protein] + ADP + H(+). It carries out the reaction L-threonyl-[protein] + ATP = O-phospho-L-threonyl-[protein] + ADP + H(+). Its function is as follows. Acts as a CAK-activating kinase that specifically activates crk1 of the crk1-mcs2 CAK complex. The protein is Serine/threonine-protein kinase csk1 (csk1) of Schizosaccharomyces pombe (strain 972 / ATCC 24843) (Fission yeast).